Consider the following 1050-residue polypeptide: Self-sufficient cytochrome P450 monooxygenase CYP505E3 (1050 aa).

Cys406 provides a ligand contact to heme. Over residues 459–481 (RGQSATGLSQGSMSASGATSSVA) the composition is skewed to polar residues. Residues 459-495 (RGQSATGLSQGSMSASGATSSVASPGPPAATGAQSNP) are disordered. The region spanning 501-641 (ISFFYGSNSG…DLELWEETNL (141 aa)) is the Flavodoxin-like domain. Residues 507 to 511 (SNSGT) and 585 to 617 (VFGCGHHDWAKTFYRIPILIDDLMHKAGATRLT) contribute to the FMN site. The FAD-binding FR-type domain occupies 679 to 907 (RGLVEAKVTA…RPAKDAFHLP (229 aa)).

The protein in the N-terminal section; belongs to the cytochrome P450 family. Requires FAD as cofactor. The cofactor is FMN. It depends on heme as a cofactor.

It catalyses the reaction 2 oxidized [cytochrome P450] + NADPH = 2 reduced [cytochrome P450] + NADP(+) + H(+). The enzyme catalyses an organic molecule + reduced [NADPH--hemoprotein reductase] + O2 = an alcohol + oxidized [NADPH--hemoprotein reductase] + H2O + H(+). The catalysed reaction is decane + reduced [NADPH--hemoprotein reductase] + O2 = 3-decanol + oxidized [NADPH--hemoprotein reductase] + H2O + H(+). It carries out the reaction dodecane + reduced [NADPH--hemoprotein reductase] + O2 = 5-dodecanol + oxidized [NADPH--hemoprotein reductase] + H2O + H(+). It catalyses the reaction tetradecane + reduced [NADPH--hemoprotein reductase] + O2 = 7-tetradecanol + oxidized [NADPH--hemoprotein reductase] + H2O + H(+). The enzyme catalyses hexadecane + reduced [NADPH--hemoprotein reductase] + O2 = 9-hexadecanol + oxidized [NADPH--hemoprotein reductase] + H2O + H(+). The catalysed reaction is dodecanoate + reduced [NADPH--hemoprotein reductase] + O2 = 5-hydroxydodecanoate + oxidized [NADPH--hemoprotein reductase] + H2O + H(+). It carries out the reaction tetradecanoate + reduced [NADPH--hemoprotein reductase] + O2 = 7-hydroxytetradecanoate + oxidized [NADPH--hemoprotein reductase] + H2O + H(+). It catalyses the reaction hexadecanoate + reduced [NADPH--hemoprotein reductase] + O2 = 9-hydroxyhexadecanoate + oxidized [NADPH--hemoprotein reductase] + H2O + H(+). The enzyme catalyses decan-1-ol + reduced [NADPH--hemoprotein reductase] + O2 = 1,3-decanediol + oxidized [NADPH--hemoprotein reductase] + H2O + H(+). The catalysed reaction is decan-1-ol + reduced [NADPH--hemoprotein reductase] + O2 = 1,7-decanediol + oxidized [NADPH--hemoprotein reductase] + H2O + H(+). It carries out the reaction dodecan-1-ol + reduced [NADPH--hemoprotein reductase] + O2 = 1,5-dodecanediol + oxidized [NADPH--hemoprotein reductase] + H2O + H(+). It catalyses the reaction dodecan-1-ol + reduced [NADPH--hemoprotein reductase] + O2 = 1,4-dodecanediol + oxidized [NADPH--hemoprotein reductase] + H2O + H(+). The enzyme catalyses dodecan-1-ol + reduced [NADPH--hemoprotein reductase] + O2 = 1,6-dodecanediol + oxidized [NADPH--hemoprotein reductase] + H2O + H(+). In terms of biological role, self-sufficient cytochrome P450 monooxygenase that catalyzes the regioselective in-chain hydroxylation of alkanes, fatty alcohols, and fatty acids at the omega-7 position. Performs hydroxylation of C10-C16 n-alkanes and C12 and C14 fatty alcohols; and thereby enables the one step biocatalytic synthesis of rare alcohols such as 5-dodecanol and 7-tetradecanol. Converts 1-dodecanol into 1,5-dodecanediol as major product with very little sub-terminally hydroxylated products with the 1,4-dodecanediol and 1,6-dodecanediol more abundant. Does not use hexadecanediol nor decanoic acid as substrates. Converts dodecanoic acid to 5-hydroxydodecanoic acid which can be further converted into delta-dodecalactone by lactonization of the 5-hydroxy acid at low pH. Also gives sub-terminal hydroxylation of dodecanoic acid with 9-hydroxydodecanoic acid being the second most abundant product. The C14 and C16 fatty acids are double hydroxylated to yield dihydroxy acids hydroxylated at both the omega-7 position and a sub-terminal position (omega-1, omega-2, or omega-3). This chain is Self-sufficient cytochrome P450 monooxygenase CYP505E3, found in Aspergillus terreus (strain NIH 2624 / FGSC A1156).